The sequence spans 149 residues: D-aminoacyl-tRNA deacylase (149 aa).

The Gly-cisPro motif, important for rejection of L-amino acids signature appears at 137 to 138 (GP).

The protein belongs to the DTD family. As to quaternary structure, homodimer.

Its subcellular location is the cytoplasm. The catalysed reaction is glycyl-tRNA(Ala) + H2O = tRNA(Ala) + glycine + H(+). It catalyses the reaction a D-aminoacyl-tRNA + H2O = a tRNA + a D-alpha-amino acid + H(+). Its function is as follows. An aminoacyl-tRNA editing enzyme that deacylates mischarged D-aminoacyl-tRNAs. Also deacylates mischarged glycyl-tRNA(Ala), protecting cells against glycine mischarging by AlaRS. Acts via tRNA-based rather than protein-based catalysis; rejects L-amino acids rather than detecting D-amino acids in the active site. By recycling D-aminoacyl-tRNA to D-amino acids and free tRNA molecules, this enzyme counteracts the toxicity associated with the formation of D-aminoacyl-tRNA entities in vivo and helps enforce protein L-homochirality. This Clostridium botulinum (strain ATCC 19397 / Type A) protein is D-aminoacyl-tRNA deacylase.